Here is a 255-residue protein sequence, read N- to C-terminus: NADH dehydrogenase [ubiquinone] flavoprotein 2, mitochondrial (255 aa).

Residues 1–35 (MLARLAAKRLLEIRQVFRQPTSQVTRSLSTALNYH) constitute a mitochondrion transit peptide. C130, C135, C171, and C175 together coordinate [2Fe-2S] cluster. Positions 214–255 (RKGEKPPHGTQNPKRIKCGPEGGNKTLLGEPKPPQFRDLDAC) are disordered.

Belongs to the complex I 24 kDa subunit family. In terms of assembly, complex I is composed of at least 49 different subunits. This is a component of the flavoprotein-sulfur (FP) fragment of the enzyme. Requires [2Fe-2S] cluster as cofactor.

It localises to the mitochondrion inner membrane. The enzyme catalyses a ubiquinone + NADH + 5 H(+)(in) = a ubiquinol + NAD(+) + 4 H(+)(out). In terms of biological role, core subunit of the mitochondrial membrane respiratory chain NADH dehydrogenase (Complex I) that is believed to belong to the minimal assembly required for catalysis. Complex I functions in the transfer of electrons from NADH to the respiratory chain. The immediate electron acceptor for the enzyme is believed to be ubiquinone. The chain is NADH dehydrogenase [ubiquinone] flavoprotein 2, mitochondrial from Arabidopsis thaliana (Mouse-ear cress).